Consider the following 89-residue polypeptide: Small ribosomal subunit protein uS19 (89 aa).

This sequence belongs to the universal ribosomal protein uS19 family.

Protein S19 forms a complex with S13 that binds strongly to the 16S ribosomal RNA. In Stenotrophomonas maltophilia (strain R551-3), this protein is Small ribosomal subunit protein uS19.